A 212-amino-acid polypeptide reads, in one-letter code: Ras-related protein Rab-2A (212 aa).

The residue at position 2 (A2) is an N-acetylalanine. The tract at residues 2–19 (AYAYLFKYIIIGDTGVGK) is required for interaction with PRKCI. Positions 16, 17, 18, 19, 20, 21, and 38 each coordinate GTP. S20 provides a ligand contact to Mg(2+). Residues 37-42 (LTIGVE) carry the Switch 1 motif. T38 and D61 together coordinate Mg(2+). Residues 63 to 72 (AGQESFRSIT) carry the Switch 2 motif. Residues G64, N119, K120, D122, A150, and K151 each contribute to the GTP site. The interval 190-212 (QHAATNASHGSNQGGQQAGGGCC) is disordered. Over residues 201–212 (NQGGQQAGGGCC) the composition is skewed to gly residues. Residues C211 and C212 are each lipidated (S-geranylgeranyl cysteine).

This sequence belongs to the small GTPase superfamily. Rab family. As to quaternary structure, interacts with PRKCI. Interacts with TRIP11. Interacts (in GTP-bound form) with GARIN1B. Interacts (GTP-bound) with HOPS complex component VPS39; interaction contributes to obtaining a functional HOPS complex that promotes autophagosome-lysosome membrane fusion driven by STX17-SNAP29-VAMP8. Interacts with VPS41. Mg(2+) serves as cofactor. In terms of processing, prenylated. Prenylation is required for association with cellular membranes.

It is found in the endoplasmic reticulum-Golgi intermediate compartment membrane. It localises to the melanosome. Its subcellular location is the endoplasmic reticulum membrane. The protein resides in the golgi apparatus membrane. The protein localises to the cytoplasmic vesicle. It is found in the secretory vesicle. It localises to the acrosome. Its subcellular location is the autophagosome membrane. It carries out the reaction GTP + H2O = GDP + phosphate + H(+). Regulated by guanine nucleotide exchange factors (GEFs) which promote the exchange of bound GDP for free GTP, GTPase activating proteins (GAPs) which increase the GTP hydrolysis activity, and GDP dissociation inhibitors (GDIs) which inhibit the dissociation of the nucleotide from the GTPase. The small GTPases Rab are key regulators of intracellular membrane trafficking, from the formation of transport vesicles to their fusion with membranes. Rabs cycle between active GTP-bound and inactive GDP-bound states. In their active state, drive transport of vesicular carriers from donor organelles to acceptor organelles to regulate the membrane traffic that maintains organelle identity and morphology. RAB2A regulates autophagy by promoting autophagosome-lysosome fusion via recruitment of the HOPS endosomal tethering complex; this process involves autophagosomal RAB2A and lysosomal RAB39A recruitment of HOPS subcomplexes VPS39-VPS11 and VPS41-VPS16-VPS18-VPS33A, respectively, which assemble into a functional complex to mediate membrane tethering and SNAREs-driven membrane fusion. Required for protein transport from the endoplasmic reticulum to the Golgi complex. Regulates the compacted morphology of the Golgi. Together with RAB2B, redundantly required for efficient autophagic flux. This Mus musculus (Mouse) protein is Ras-related protein Rab-2A.